The primary structure comprises 225 residues: Dehydrin DHN4 (225 aa).

The disordered stretch occupies residues 1–78 (MEYQGQQHGR…EDDGMGGRRK (78 aa)). The span at 21–39 (HGVGTGMGTHGGVGTGAAA) shows a compositional bias: gly residues. Tandem repeats lie at residues 105–118 (YGQQ…TGGT), 119–136 (YGQQ…TDGT), 137–159 (YGQQ…TGGT), 160–178 (YGQQ…GTGG), and 179–199 (TYGQ…TGGT). Residues 105–199 (YGQQGTGMAG…GTGMHGTGGT (95 aa)) are 5 X approximate tandem repeats.

This sequence belongs to the plant dehydrin family.

This chain is Dehydrin DHN4 (DHN4), found in Hordeum vulgare (Barley).